Reading from the N-terminus, the 62-residue chain is UPF0434 protein Smed_3047 (62 aa).

Belongs to the UPF0434 family.

This chain is UPF0434 protein Smed_3047, found in Sinorhizobium medicae (strain WSM419) (Ensifer medicae).